Consider the following 111-residue polypeptide: Universal stress protein B (111 aa).

A run of 2 helical transmembrane segments spans residues 1–21 (MIST…NMAR) and 90–110 (FILT…LLIW).

Belongs to the universal stress protein B family.

The protein resides in the cell inner membrane. The polypeptide is Universal stress protein B (Escherichia fergusonii (strain ATCC 35469 / DSM 13698 / CCUG 18766 / IAM 14443 / JCM 21226 / LMG 7866 / NBRC 102419 / NCTC 12128 / CDC 0568-73)).